Here is a 457-residue protein sequence, read N- to C-terminus: Siroheme synthase (457 aa).

A precorrin-2 dehydrogenase /sirohydrochlorin ferrochelatase region spans residues M1 to T204. NAD(+) contacts are provided by residues D22 to V23 and L43 to A44. At S128 the chain carries Phosphoserine. The tract at residues G216–H457 is uroporphyrinogen-III C-methyltransferase. Residue P225 coordinates S-adenosyl-L-methionine. The active-site Proton acceptor is D248. K270 (proton donor) is an active-site residue. S-adenosyl-L-methionine is bound by residues G301–D303, I306, T331–A332, M382, and G411.

In the N-terminal section; belongs to the precorrin-2 dehydrogenase / sirohydrochlorin ferrochelatase family. The protein in the C-terminal section; belongs to the precorrin methyltransferase family.

It catalyses the reaction uroporphyrinogen III + 2 S-adenosyl-L-methionine = precorrin-2 + 2 S-adenosyl-L-homocysteine + H(+). It carries out the reaction precorrin-2 + NAD(+) = sirohydrochlorin + NADH + 2 H(+). The enzyme catalyses siroheme + 2 H(+) = sirohydrochlorin + Fe(2+). It participates in cofactor biosynthesis; adenosylcobalamin biosynthesis; precorrin-2 from uroporphyrinogen III: step 1/1. The protein operates within cofactor biosynthesis; adenosylcobalamin biosynthesis; sirohydrochlorin from precorrin-2: step 1/1. Its pathway is porphyrin-containing compound metabolism; siroheme biosynthesis; precorrin-2 from uroporphyrinogen III: step 1/1. It functions in the pathway porphyrin-containing compound metabolism; siroheme biosynthesis; siroheme from sirohydrochlorin: step 1/1. It participates in porphyrin-containing compound metabolism; siroheme biosynthesis; sirohydrochlorin from precorrin-2: step 1/1. Its function is as follows. Multifunctional enzyme that catalyzes the SAM-dependent methylations of uroporphyrinogen III at position C-2 and C-7 to form precorrin-2 via precorrin-1. Then it catalyzes the NAD-dependent ring dehydrogenation of precorrin-2 to yield sirohydrochlorin. Finally, it catalyzes the ferrochelation of sirohydrochlorin to yield siroheme. The sequence is that of Siroheme synthase from Shigella flexneri.